Here is a 186-residue protein sequence, read N- to C-terminus: NADH-quinone oxidoreductase subunit C (186 aa).

Residues 166 to 186 (DSLTPWKGVGRPSDPFDGRKE) are disordered.

Belongs to the complex I 30 kDa subunit family. NDH-1 is composed of 14 different subunits. Subunits NuoB, C, D, E, F, and G constitute the peripheral sector of the complex.

The protein resides in the cell inner membrane. It catalyses the reaction a quinone + NADH + 5 H(+)(in) = a quinol + NAD(+) + 4 H(+)(out). Its function is as follows. NDH-1 shuttles electrons from NADH, via FMN and iron-sulfur (Fe-S) centers, to quinones in the respiratory chain. The immediate electron acceptor for the enzyme in this species is believed to be ubiquinone. Couples the redox reaction to proton translocation (for every two electrons transferred, four hydrogen ions are translocated across the cytoplasmic membrane), and thus conserves the redox energy in a proton gradient. The protein is NADH-quinone oxidoreductase subunit C of Neorickettsia sennetsu (strain ATCC VR-367 / Miyayama) (Ehrlichia sennetsu).